The sequence spans 447 residues: 2-oxoadipate dioxygenase/decarboxylase (447 aa).

2-oxoadipate contacts are provided by histidine 68, arginine 72, and histidine 224. Histidine 68 contacts Fe(2+). Fe(2+) is bound by residues histidine 224 and glutamate 290. Valine 391 is a binding site for 2-oxoadipate.

It belongs to the 2-oxoadipate dioxygenase/decarboxylase family. The cofactor is Fe(2+).

The enzyme catalyses 2-oxoadipate + O2 = (R)-2-hydroxyglutarate + CO2. Catalyzes the decarboxylation and hydroxylation of 2-oxoadipate (2OA) to form D-2-hydroxyglutarate (D-2-HGA). In Shigella flexneri, this protein is 2-oxoadipate dioxygenase/decarboxylase.